The chain runs to 260 residues: uncharacterized protein (260 aa).

This sequence belongs to the methyltransferase superfamily.

Its subcellular location is the cytoplasm. The protein localises to the nucleus. Probable methyltransferase. This is an uncharacterized protein from Schizosaccharomyces pombe (strain 972 / ATCC 24843) (Fission yeast).